Consider the following 94-residue polypeptide: MTKSELIERLAGQQSHIPAKAVEDAVKEMLEHMAATLAEGERIEIRGFGSFSLHYRAPRVGRNPKTGDKVELDGKYVPHFKPGKELRDRANIYG.

Belongs to the bacterial histone-like protein family. As to quaternary structure, heterodimer of an alpha and a beta chain.

In terms of biological role, this protein is one of the two subunits of integration host factor, a specific DNA-binding protein that functions in genetic recombination as well as in transcriptional and translational control. The sequence is that of Integration host factor subunit beta (ihfB) from Serratia marcescens.